We begin with the raw amino-acid sequence, 568 residues long: Urease subunit alpha (568 aa).

Residues 130-568 (GGIDTHIHFI…LPMAQRYFLF (439 aa)) enclose the Urease domain. Residues His-135, His-137, and Lys-218 each coordinate Ni(2+). Position 218 is an N6-carboxylysine (Lys-218). Substrate is bound at residue His-220. Ni(2+) is bound by residues His-247 and His-273. Residue His-321 is the Proton donor of the active site. Asp-361 is a binding site for Ni(2+).

This sequence belongs to the metallo-dependent hydrolases superfamily. Urease alpha subunit family. Heterotrimer of UreA (gamma), UreB (beta) and UreC (alpha) subunits. Three heterotrimers associate to form the active enzyme. The cofactor is Ni cation. Post-translationally, carboxylation allows a single lysine to coordinate two nickel ions.

The protein resides in the cytoplasm. It carries out the reaction urea + 2 H2O + H(+) = hydrogencarbonate + 2 NH4(+). The protein operates within nitrogen metabolism; urea degradation; CO(2) and NH(3) from urea (urease route): step 1/1. This chain is Urease subunit alpha, found in Burkholderia vietnamiensis (strain G4 / LMG 22486) (Burkholderia cepacia (strain R1808)).